Here is a 332-residue protein sequence, read N- to C-terminus: Cytochrome c oxidase subunit 2 (332 aa).

An N-terminal signal peptide occupies residues 1–20 (MKIPGSVITLLIGVVITVVS). A run of 2 helical transmembrane segments spans residues 48-68 (MMTI…YCLI) and 87-107 (VPLE…LAVY). The Cu cation site is built by H214, C249, C253, and H257.

Belongs to the cytochrome c oxidase subunit 2 family. It depends on Cu cation as a cofactor.

It localises to the cell membrane. It catalyses the reaction 4 Fe(II)-[cytochrome c] + O2 + 8 H(+)(in) = 4 Fe(III)-[cytochrome c] + 2 H2O + 4 H(+)(out). In terms of biological role, subunits I and II form the functional core of the enzyme complex. Electrons originating in cytochrome c are transferred via heme a and Cu(A) to the binuclear center formed by heme a3 and Cu(B). The polypeptide is Cytochrome c oxidase subunit 2 (ctaC) (Synechocystis sp. (strain ATCC 27184 / PCC 6803 / Kazusa)).